The primary structure comprises 104 residues: Integration host factor subunit beta (104 aa).

Belongs to the bacterial histone-like protein family. Heterodimer of an alpha and a beta chain.

Its function is as follows. This protein is one of the two subunits of integration host factor, a specific DNA-binding protein that functions in genetic recombination as well as in transcriptional and translational control. The protein is Integration host factor subunit beta of Xylella fastidiosa (strain M23).